Here is a 506-residue protein sequence, read N- to C-terminus: D-alanine--D-alanyl carrier protein ligase (506 aa).

ATP is bound at residue 152 to 153 (TS). Position 197 (aspartate 197) interacts with D-alanine. 292 to 297 (NTYGPT) lines the ATP pocket. Residue valine 301 participates in D-alanine binding. Residues aspartate 383, 395 to 398 (YRGR), and lysine 494 each bind ATP. Lysine 494 serves as a coordination point for D-alanine.

Belongs to the ATP-dependent AMP-binding enzyme family. DltA subfamily.

Its subcellular location is the cytoplasm. The enzyme catalyses holo-[D-alanyl-carrier protein] + D-alanine + ATP = D-alanyl-[D-alanyl-carrier protein] + AMP + diphosphate. It functions in the pathway cell wall biogenesis; lipoteichoic acid biosynthesis. Functionally, catalyzes the first step in the D-alanylation of lipoteichoic acid (LTA), the activation of D-alanine and its transfer onto the D-alanyl carrier protein (Dcp) DltC. In an ATP-dependent two-step reaction, forms a high energy D-alanyl-AMP intermediate, followed by transfer of the D-alanyl residue as a thiol ester to the phosphopantheinyl prosthetic group of the Dcp. D-alanylation of LTA plays an important role in modulating the properties of the cell wall in Gram-positive bacteria, influencing the net charge of the cell wall. The sequence is that of D-alanine--D-alanyl carrier protein ligase from Lacticaseibacillus casei (strain BL23) (Lactobacillus casei).